The following is a 146-amino-acid chain: Large ribosomal subunit protein uL15 (146 aa).

The tract at residues 1–56 (MKLHELRAAEGANKASKRVGRGTGSGLGKTSGKGQNGQNSRSGGGVRPGFEGGQMP) is disordered. Composition is skewed to gly residues over residues 21-35 (RGTG…GKGQ) and 42-52 (SGGGVRPGFEG).

This sequence belongs to the universal ribosomal protein uL15 family. Part of the 50S ribosomal subunit.

Functionally, binds to the 23S rRNA. The sequence is that of Large ribosomal subunit protein uL15 from Clostridium botulinum (strain Loch Maree / Type A3).